We begin with the raw amino-acid sequence, 300 residues long: Iron-dependent extradiol dioxygenase (300 aa).

VOC domains follow at residues 5-120 (SLGY…VFHG) and 142-270 (GMGH…FGCE). His-145 contacts Fe cation. Substrate contacts are provided by His-200, His-215, Asp-250, and Tyr-256. His-215 contributes to the Fe cation binding site. Residue Glu-266 coordinates Fe cation.

It belongs to the extradiol ring-cleavage dioxygenase family. In terms of assembly, homodimer, but may form a homooctamer. Fe(2+) is required as a cofactor.

It catalyses the reaction 3,4-dihydroxy-9,10-secoandrosta-1,3,5(10)-triene-9,17-dione + O2 = (1E,2Z)-3-hydroxy-5,9,17-trioxo-4,5:9,10-disecoandrosta-1(10),2-dien-4-oate + H(+). The protein operates within steroid metabolism; cholesterol metabolism. Functionally, catalyzes the meta-cleavage of 3,4-dihydroxy-9,10-seconandrost-1,3,5(10)-triene-9,17-dione (3,4-DHSA) to produce 4,5-9,10-diseco-3-hydroxy-5,9,17-trioxoandrosta-1(10),2-diene-4-oic acid (4,9-DSHA). The protein is Iron-dependent extradiol dioxygenase (hsaC) of Mycobacterium tuberculosis (strain CDC 1551 / Oshkosh).